Reading from the N-terminus, the 647-residue chain is Threonine--tRNA ligase (647 aa).

Positions 1 to 61 (MIKITFPDGA…EEDGSIEIVT (61 aa)) constitute a TGS domain. The interval 240 to 538 (DHRKLGKELD…LIETYKGAFP (299 aa)) is catalytic. Residues Cys-334, His-385, and His-515 each coordinate Zn(2+).

The protein belongs to the class-II aminoacyl-tRNA synthetase family. In terms of assembly, homodimer. Requires Zn(2+) as cofactor.

It is found in the cytoplasm. The catalysed reaction is tRNA(Thr) + L-threonine + ATP = L-threonyl-tRNA(Thr) + AMP + diphosphate + H(+). Its function is as follows. Catalyzes the attachment of threonine to tRNA(Thr) in a two-step reaction: L-threonine is first activated by ATP to form Thr-AMP and then transferred to the acceptor end of tRNA(Thr). Also edits incorrectly charged L-seryl-tRNA(Thr). The chain is Threonine--tRNA ligase from Streptococcus pyogenes serotype M2 (strain MGAS10270).